Reading from the N-terminus, the 298-residue chain is MGRGNSTEVTEFHLLGFGVQHEFQHVLFIVLLLIYVTSLIGNIGMILLIKTDSRLQTPMYFFPQHLAFVDICYTSAITPKMLQSFTEENNLITFRGCVIQFLVYATFATSDCYLLAIMAMDCYVAICKPLRYPMIMSQTVYIQLVAGSYIIGSINASVHTGFTFSLSFCKSNKINHFFCDGLPILALSCSNIDINIILDVVFVGFDLMFTELVIIFSYIYIMVTILKMSSTAGRKKSFSTCASHLTAVTIFYGTLSYMYLQPQSNNSQENMKVASIFYGTVIPMLNPLIYSLRNKEGK.

At 1 to 25 the chain is on the extracellular side; sequence MGRGNSTEVTEFHLLGFGVQHEFQH. N-linked (GlcNAc...) asparagine glycosylation occurs at N5. A helical membrane pass occupies residues 26 to 46; sequence VLFIVLLLIYVTSLIGNIGMI. Residues 47–54 lie on the Cytoplasmic side of the membrane; it reads LLIKTDSR. A helical transmembrane segment spans residues 55–75; that stretch reads LQTPMYFFPQHLAFVDICYTS. Residues 76-99 are Extracellular-facing; the sequence is AITPKMLQSFTEENNLITFRGCVI. C97 and C189 are oxidised to a cystine. Residues 100 to 120 traverse the membrane as a helical segment; sequence QFLVYATFATSDCYLLAIMAM. Over 121–133 the chain is Cytoplasmic; that stretch reads DCYVAICKPLRYP. The helical transmembrane segment at 134 to 154 threads the bilayer; it reads MIMSQTVYIQLVAGSYIIGSI. The N-linked (GlcNAc...) asparagine glycan is linked to N155. Over 155 to 196 the chain is Extracellular; the sequence is NASVHTGFTFSLSFCKSNKINHFFCDGLPILALSCSNIDINI. Residues 197 to 217 form a helical membrane-spanning segment; the sequence is ILDVVFVGFDLMFTELVIIFS. Residues 218–237 are Cytoplasmic-facing; the sequence is YIYIMVTILKMSSTAGRKKS. Residues 238–258 traverse the membrane as a helical segment; that stretch reads FSTCASHLTAVTIFYGTLSYM. At 259–271 the chain is on the extracellular side; the sequence is YLQPQSNNSQENM. The N-linked (GlcNAc...) asparagine glycan is linked to N265. A helical membrane pass occupies residues 272–292; it reads KVASIFYGTVIPMLNPLIYSL. At 293–298 the chain is on the cytoplasmic side; it reads RNKEGK.

The protein belongs to the G-protein coupled receptor 1 family.

The protein localises to the cell membrane. Functionally, odorant receptor. This Homo sapiens (Human) protein is Olfactory receptor 5AK3 (OR5AK3P).